We begin with the raw amino-acid sequence, 284 residues long: Pantothenate synthetase (284 aa).

M30–H37 is a binding site for ATP. Residue H37 is the Proton donor of the active site. Q61 serves as a coordination point for (R)-pantoate. Residue Q61 participates in beta-alanine binding. Residue G149 to D152 participates in ATP binding. (R)-pantoate is bound at residue Q155. Residues V178 and L186 to R189 each bind ATP.

This sequence belongs to the pantothenate synthetase family. In terms of assembly, homodimer.

It is found in the cytoplasm. It carries out the reaction (R)-pantoate + beta-alanine + ATP = (R)-pantothenate + AMP + diphosphate + H(+). It participates in cofactor biosynthesis; (R)-pantothenate biosynthesis; (R)-pantothenate from (R)-pantoate and beta-alanine: step 1/1. Functionally, catalyzes the condensation of pantoate with beta-alanine in an ATP-dependent reaction via a pantoyl-adenylate intermediate. The protein is Pantothenate synthetase of Cronobacter sakazakii (strain ATCC BAA-894) (Enterobacter sakazakii).